We begin with the raw amino-acid sequence, 796 residues long: Bud site selection protein 27 (796 aa).

Residues 81-121 (KEEAITFVDDKLKLMEDAIEQFNLKIEEAKKTLDNLNHMED) adopt a coiled-coil conformation. The segment covering 152–168 (VISSSVTPTTKQPSQSN) has biased composition (polar residues). 5 disordered regions span residues 152–197 (VISS…EENL), 300–344 (LRAQ…QVGF), 421–458 (EGEASRSNRRTRVSRFRKDRASKKENTLSTFKQETTRS), 535–624 (EKEP…AKTG), and 752–796 (ATAS…DSKP). 2 stretches are compositionally biased toward basic and acidic residues: residues 169-197 (SKKEQTPAVGPKEKGLAKEKKSKSFEENL) and 306-318 (SQDHEREEGDVNK). Over residues 427–441 (SNRRTRVSRFRKDRA) the composition is skewed to basic residues. A compositionally biased stretch (basic and acidic residues) spans 535–550 (EKEPEINSKSEFETPF). Residues 551–568 (KKKKLKSLQKPRSSKSMK) show a composition bias toward basic residues. Residues 579-589 (ISDDDYDDDDD) are compositionally biased toward acidic residues. Ser580 is subject to Phosphoserine. The span at 601–610 (NNTDEQDKFP) shows a compositional bias: basic and acidic residues.

This sequence belongs to the prefoldin subunit alpha family.

The protein resides in the cytoplasm. Involved in gene expression controlled by TOR kinase and nutrient signaling. May also be involved in positioning the proximal bud pole signal. The sequence is that of Bud site selection protein 27 (BUD27) from Saccharomyces cerevisiae (strain ATCC 204508 / S288c) (Baker's yeast).